The chain runs to 112 residues: Large ribosomal subunit protein eL30y (112 aa).

This sequence belongs to the eukaryotic ribosomal protein eL30 family.

The protein is Large ribosomal subunit protein eL30y (RPL30B) of Arabidopsis thaliana (Mouse-ear cress).